Consider the following 110-residue polypeptide: Thiosulfate sulfurtransferase GlpE (110 aa).

A Rhodanese domain is found at 17-105 (HQGKAVLVDI…WHRHFPAEVE (89 aa)). The active-site Cysteine persulfide intermediate is the Cys-65.

Belongs to the GlpE family.

The protein resides in the cytoplasm. It carries out the reaction thiosulfate + hydrogen cyanide = thiocyanate + sulfite + 2 H(+). The enzyme catalyses thiosulfate + [thioredoxin]-dithiol = [thioredoxin]-disulfide + hydrogen sulfide + sulfite + 2 H(+). Its function is as follows. Transferase that catalyzes the transfer of sulfur from thiosulfate to thiophilic acceptors such as cyanide or dithiols. May function in a CysM-independent thiosulfate assimilation pathway by catalyzing the conversion of thiosulfate to sulfite, which can then be used for L-cysteine biosynthesis. The protein is Thiosulfate sulfurtransferase GlpE of Enterobacter sp. (strain 638).